The following is a 283-amino-acid chain: Transmembrane protein 119 (283 aa).

A signal peptide spans 1–25; the sequence is MVSAAAPSLLILLLLLLGSVPATDA. The Extracellular portion of the chain corresponds to 26–96; it reads RSVPLKATFL…IVDFFRQYVM (71 aa). S41 carries O-linked (Xyl...) (chondroitin sulfate) serine glycosylation. Positions 43-52 are enriched in low complexity; it reads EAEGSSASSP. The disordered stretch occupies residues 43-76; sequence EAEGSSASSPSLPPPWTPALSPTSMGPQPITLGG. A helical transmembrane segment spans residues 97 to 117; it reads LIAVVGSLAFLLMFIVCAAVI. At 118–283 the chain is on the cytoplasmic side; it reads TRQKQKASAY…CACSSVHPSV (166 aa). 2 disordered regions span residues 136–168 and 183–283; these read KYVD…ALDS and LKSP…HPSV. Basic and acidic residues-rich tracts occupy residues 153–164 and 198–213; these read VPDRAPDSRPEE and RMVE…KGSQ. A compositionally biased stretch (low complexity) spans 238 to 264; that stretch reads GVLEGAVVAGEGQGELEGSLLLAQEAQ. The residue at position 272 (S272) is a Phosphoserine.

As to quaternary structure, interacts with SMAD1, SMAD5 and RUNX2. As to expression, expressed in brain microglia (at protein level). Detected in urine (at protein level). Elevated expression levels seen in the brain of patients with Alzheimer disease. Expressed by osteoblast-like cells in bone tissues and follicular dendritic cells in lymphoid tissues.

The protein resides in the cell membrane. It localises to the cytoplasm. Its subcellular location is the endoplasmic reticulum membrane. The protein localises to the secreted. Plays an important role in bone formation and normal bone mineralization. Promotes the differentiation of myoblasts into osteoblasts. May induce the commitment and differentiation of myoblasts into osteoblasts through an enhancement of BMP2 production and interaction with the BMP-RUNX2 pathway. Up-regulates the expression of ATF4, a transcription factor which plays a central role in osteoblast differentiation. Essential for normal spermatogenesis and late testicular differentiation. This Homo sapiens (Human) protein is Transmembrane protein 119 (TMEM119).